Here is a 309-residue protein sequence, read N- to C-terminus: tRNA pseudouridine synthase B (309 aa).

Catalysis depends on Asp-39, which acts as the Nucleophile. Residues Leu-229–Phe-306 enclose the PUA domain.

Belongs to the pseudouridine synthase TruB family. Type 1 subfamily.

The catalysed reaction is uridine(55) in tRNA = pseudouridine(55) in tRNA. Functionally, responsible for synthesis of pseudouridine from uracil-55 in the psi GC loop of transfer RNAs. In Thermotoga maritima (strain ATCC 43589 / DSM 3109 / JCM 10099 / NBRC 100826 / MSB8), this protein is tRNA pseudouridine synthase B.